Consider the following 246-residue polypeptide: UPF0309 protein OB3413 (246 aa).

One can recognise an SIS domain in the interval 33–212 (MATAVMNGNS…VLKMIEIFEE (180 aa)).

It belongs to the UPF0309 family.

The chain is UPF0309 protein OB3413 from Oceanobacillus iheyensis (strain DSM 14371 / CIP 107618 / JCM 11309 / KCTC 3954 / HTE831).